The sequence spans 507 residues: Probable Xaa-Pro aminopeptidase TRV_02643 (507 aa).

Residues D275, D286, E434, and E478 each contribute to the Mn(2+) site.

It belongs to the peptidase M24B family. Mn(2+) is required as a cofactor.

It carries out the reaction Release of any N-terminal amino acid, including proline, that is linked to proline, even from a dipeptide or tripeptide.. Catalyzes the removal of a penultimate prolyl residue from the N-termini of peptides. In Trichophyton verrucosum (strain HKI 0517), this protein is Probable Xaa-Pro aminopeptidase TRV_02643.